The following is a 66-amino-acid chain: LTCVTSKSIFGITTENCPDGQNLCFKKWYYIVPRYSDITWGCAATCPKPTNVRETIHCCETDKCNE.

4 disulfide bridges follow: Cys3–Cys24, Cys17–Cys42, Cys46–Cys58, and Cys59–Cys64.

Belongs to the three-finger toxin family. Short-chain subfamily. Aminergic toxin sub-subfamily. As to quaternary structure, monomer. Expressed by the venom gland.

The protein resides in the secreted. Its function is as follows. Binds to the muscarinic acetylcholine receptor (CHRM). The protein is Muscarinic toxin 4 of Dendroaspis angusticeps (Eastern green mamba).